A 41-amino-acid polypeptide reads, in one-letter code: Alpha-conotoxin TxIB (41 aa).

A propeptide spanning residues 1–20 (FDGRNTSANNKATDLMALPV) is cleaved from the precursor. Disulfide bonds link Cys23–Cys29 and Cys24–Cys37. Residues 25 to 27 (SDP) are ser-Xaa-Pro motif, crucial for potent interaction with nAChR. Cys37 carries the post-translational modification Cysteine amide; in Alpha-conotoxin TxIB. Residues 39-41 (GRR) constitute a propeptide that is removed on maturation.

The protein belongs to the conotoxin A superfamily. In terms of tissue distribution, expressed by the venom duct.

It is found in the secreted. Functionally, alpha-conotoxins act on postsynaptic membranes, they bind to the nicotinic acetylcholine receptors (nAChR) and thus inhibit them. This conotoxin is a subtype-specific blocker of alpha-6/alpha-3-beta-2-beta-3 (CHRNA6/CHRNA3-CHRNB2-CHRNB3) nAChRs nicotinic acetylcholine receptors (nAChRs) (IC(50)=28.4 nM). This Conus textile (Cloth-of-gold cone) protein is Alpha-conotoxin TxIB.